The chain runs to 444 residues: UDP-N-acetylglucosamine 1-carboxyvinyltransferase (444 aa).

22–23 contacts phosphoenolpyruvate; it reads KN. Arg-94 contributes to the UDP-N-acetyl-alpha-D-glucosamine binding site. Asp-119 serves as the catalytic Proton donor. Positions 309 and 331 each coordinate UDP-N-acetyl-alpha-D-glucosamine.

It belongs to the EPSP synthase family. MurA subfamily.

The protein localises to the cytoplasm. The enzyme catalyses phosphoenolpyruvate + UDP-N-acetyl-alpha-D-glucosamine = UDP-N-acetyl-3-O-(1-carboxyvinyl)-alpha-D-glucosamine + phosphate. The protein operates within cell wall biogenesis; peptidoglycan biosynthesis. In terms of biological role, cell wall formation. Adds enolpyruvyl to UDP-N-acetylglucosamine. This is UDP-N-acetylglucosamine 1-carboxyvinyltransferase from Chlamydia trachomatis serovar A (strain ATCC VR-571B / DSM 19440 / HAR-13).